A 494-amino-acid chain; its full sequence is Cytochrome P450 2A8 (494 aa).

C439 provides a ligand contact to heme.

The protein belongs to the cytochrome P450 family. It depends on heme as a cofactor. As to expression, liver.

It is found in the endoplasmic reticulum membrane. It localises to the microsome membrane. The catalysed reaction is an organic molecule + reduced [NADPH--hemoprotein reductase] + O2 = an alcohol + oxidized [NADPH--hemoprotein reductase] + H2O + H(+). Functionally, highly active in 7-ethoxycoumarin O-deethylation, and benzphetamine N-demethylation; moderately active in testosterone 7-alpha-hydroxylation, ethylmorphine N-demethylation, p-nitroanisole O-demethylation; and only slightly active in benzopyrene 3-hydroxylation, 7-ethoxyresorufin O-deethylation, testosterone 2-alpha-hydroxylation and testosterone 17-oxidation. Competent in the metabolic activation of aflatoxin B1. The chain is Cytochrome P450 2A8 (CYP2A8) from Mesocricetus auratus (Golden hamster).